The primary structure comprises 182 residues: uncharacterized protein (182 aa).

The N-acetyltransferase domain maps to 55-182 (VNLHDLEKLC…GVKGMFWYPL (128 aa)).

Belongs to the acetyltransferase family. Ycf52 subfamily.

Its subcellular location is the plastid. It is found in the chloroplast. This is an uncharacterized protein from Gracilaria tenuistipitata var. liui (Red alga).